We begin with the raw amino-acid sequence, 428 residues long: uncharacterized protein (428 aa).

Residues 72-91 (SQGSPVAPSPNHRSTMYSSS) are disordered. Ser-127 bears the Phosphoserine mark.

This is an uncharacterized protein from Saccharomyces cerevisiae (strain ATCC 204508 / S288c) (Baker's yeast).